We begin with the raw amino-acid sequence, 86 residues long: Kappa-theraphotoxin-Cg1a 5 (86 aa).

The signal sequence occupies residues 1-21 (MKVSVLITLAVLGVMFVWTSA). The propeptide occupies 22 to 50 (AELEERGSDQRDSPAWLKSMERIFQSEER). 3 disulfide bridges follow: C52-C66, C59-C71, and C65-C78. Residue F84 is modified to Phenylalanine amide.

Belongs to the neurotoxin 10 (Hwtx-1) family. 28 (Jztx-11) subfamily. Expressed by the venom gland.

It is found in the secreted. This toxin acts as a voltage-dependent gating-modifier. It inhibits the sodium conductance (IC(50)=124 nM) and slows the fast inactivation (EC(50)=1180 nM) of Nav1.5/SCN5A. It significantly shifts the activation to more depolarized voltages and decreases the deactivation of Nav1.5 currents upon extreme depolarization, but only slightly affects voltage-dependence of steady-state inactivation. In addition, this toxin causes an approximately five-fold decrease in the rate of recovery from inactivation and an approximately 1.9-fold reduction in the closed-state inactivation rate. This toxin integrates the functions of site 3 toxins (alpha-scorpion toxins) with site 4 toxins (beta-scorpion and spider toxins) by targeting multiple sites on Nav1.5. Also shows inhibition of voltage-gated potassium channels (5 uM completely inhibits Kv2.1/KCNB1, whereas 5 uM moderately inhibits Kv4.2/KCND2 Kv4.1/KCND1 channels). The polypeptide is Kappa-theraphotoxin-Cg1a 5 (Chilobrachys guangxiensis (Chinese earth tiger tarantula)).